We begin with the raw amino-acid sequence, 380 residues long: Queuine tRNA-ribosyltransferase (380 aa).

Residue aspartate 95 is the Proton acceptor of the active site. Residues 95–99 (DSGGF), aspartate 149, glutamine 192, and glycine 219 contribute to the substrate site. The RNA binding stretch occupies residues 250 to 256 (GVGSPDA). Catalysis depends on aspartate 269, which acts as the Nucleophile. An RNA binding; important for wobble base 34 recognition region spans residues 274-278 (TRIAR). Zn(2+) contacts are provided by cysteine 307, cysteine 309, cysteine 312, and histidine 338.

The protein belongs to the queuine tRNA-ribosyltransferase family. Homodimer. Within each dimer, one monomer is responsible for RNA recognition and catalysis, while the other monomer binds to the replacement base PreQ1. The cofactor is Zn(2+).

The enzyme catalyses 7-aminomethyl-7-carbaguanine + guanosine(34) in tRNA = 7-aminomethyl-7-carbaguanosine(34) in tRNA + guanine. It participates in tRNA modification; tRNA-queuosine biosynthesis. Functionally, catalyzes the base-exchange of a guanine (G) residue with the queuine precursor 7-aminomethyl-7-deazaguanine (PreQ1) at position 34 (anticodon wobble position) in tRNAs with GU(N) anticodons (tRNA-Asp, -Asn, -His and -Tyr). Catalysis occurs through a double-displacement mechanism. The nucleophile active site attacks the C1' of nucleotide 34 to detach the guanine base from the RNA, forming a covalent enzyme-RNA intermediate. The proton acceptor active site deprotonates the incoming PreQ1, allowing a nucleophilic attack on the C1' of the ribose to form the product. After dissociation, two additional enzymatic reactions on the tRNA convert PreQ1 to queuine (Q), resulting in the hypermodified nucleoside queuosine (7-(((4,5-cis-dihydroxy-2-cyclopenten-1-yl)amino)methyl)-7-deazaguanosine). This Latilactobacillus sakei subsp. sakei (strain 23K) (Lactobacillus sakei subsp. sakei) protein is Queuine tRNA-ribosyltransferase.